The chain runs to 602 residues: Alpha-glucosides permease MPH3 (602 aa).

The Cytoplasmic portion of the chain corresponds to 1 to 106 (MKNLSFLINR…AAAWSLLVST (106 aa)). The chain crosses the membrane as a helical span at residues 107–127 (TLIMEGYDTAILGAFYALPIF). Residues 128 to 142 (QRKFGSQNDKTGEWE) are Extracellular-facing. Residues 143–163 (ISASWQIGLTLCYMAGEIVGL) traverse the membrane as a helical segment. Residues 164–178 (QLTGPSVDLVGNRYT) are Cytoplasmic-facing. The helical transmembrane segment at 179–199 (LIIALFFLAAFTFILYFCNSL) threads the bilayer. Residue Gly-200 is a topological domain, extracellular. Residues 201–221 (MIAVGQALCGMPWGCFQCLTV) traverse the membrane as a helical segment. Topologically, residues 222 to 234 (SYASEICPLALRY) are cytoplasmic. Residues 235 to 255 (YLTTYSNLCWLFGQLFAAGIM) form a helical membrane-spanning segment. Topologically, residues 256–270 (KNSQKKYADSELGYK) are extracellular. Residues 271–291 (LPFALQWILPVPLALGIFFAP) form a helical membrane-spanning segment. The Cytoplasmic segment spans residues 292 to 363 (ESPWWLVKKG…EDKINRRRTR (72 aa)). A helical transmembrane segment spans residues 364-384 (ITCLCWAGQATCGSILIGYST). The Extracellular segment spans residues 385-397 (YFYEKAGVSTEMS). A helical membrane pass occupies residues 398-418 (FTFSIIQYCLGICATFLSWWA). The Cytoplasmic segment spans residues 419–426 (SKYFGRYD). The helical transmembrane segment at 427–447 (LYAFGLAFQTIVFFIIGGLGC) threads the bilayer. The Extracellular segment spans residues 448 to 459 (SSTHGSKMGSGS). The helical transmembrane segment at 460–480 (LLMAVAFFYNLGIAPVVFCLV) threads the bilayer. Residues 481 to 492 (SEMPSSRLRTKT) lie on the Cytoplasmic side of the membrane. The chain crosses the membrane as a helical span at residues 493 to 513 (IILARNTYNVVSIICSVLILY). Topologically, residues 514-525 (QLNSKKWNWGAK) are extracellular. The helical transmembrane segment at 526-546 (SGFFWGVLCFCTLIWAVVDLP) threads the bilayer. The Cytoplasmic segment spans residues 547-602 (ETAGKTFVEINELFKLGVSARKFKSTKVDPFVVKTPPKDVSHNDPKGDIEASIAEE). Positions 582 to 595 (PPKDVSHNDPKGDI) are enriched in basic and acidic residues. A disordered region spans residues 582-602 (PPKDVSHNDPKGDIEASIAEE).

Belongs to the major facilitator superfamily. Sugar transporter (TC 2.A.1.1) family.

The protein resides in the cell membrane. Its function is as follows. High-affinity uptake of maltose and maltotriose. Also transports alpha-methylglucoside, glucose and turanose but not melezitose or trehalose. This is Alpha-glucosides permease MPH3 (MPH3) from Saccharomyces cerevisiae (strain ATCC 204508 / S288c) (Baker's yeast).